The following is a 285-amino-acid chain: Protoheme IX farnesyltransferase (285 aa).

9 helical membrane passes run 8–28, 36–56, 80–100, 107–127, 133–153, 163–183, 209–229, 232–252, and 265–285; these read ITKPGIIIGNSTLITGGFLFA, YVLFIYTILGASLVIASACVF, LLPVFSVFNFAIFLGVLGLSI, FISMSLAVFGFFIYVVLYTMF, FYSTFIGSFSGSTPSVIGYTA, ILLFVIVIFWQMSHFYSISIM, IFFYVLNFSFFSSLFTFLGYL, NFLLLSSIVNFYWSFLSYSNI, and FYFSIIVIVFFNFLISIDVFF.

It belongs to the UbiA prenyltransferase family. Protoheme IX farnesyltransferase subfamily.

It localises to the cell membrane. It carries out the reaction heme b + (2E,6E)-farnesyl diphosphate + H2O = Fe(II)-heme o + diphosphate. Its pathway is porphyrin-containing compound metabolism; heme O biosynthesis; heme O from protoheme: step 1/1. Converts heme B (protoheme IX) to heme O by substitution of the vinyl group on carbon 2 of heme B porphyrin ring with a hydroxyethyl farnesyl side group. The chain is Protoheme IX farnesyltransferase from Buchnera aphidicola subsp. Acyrthosiphon pisum (strain Tuc7).